A 296-amino-acid polypeptide reads, in one-letter code: Circadian clock oscillator protein KaiA (296 aa).

Positions 2–133 are psR domain, binds oxidized quinones; the sequence is ARPGLTIALL…LRQGRADGRS (132 aa). The KaiA N-terminal domain occupies 2 to 152; that stretch reads ARPGLTIALL…KLSRRLQERL (151 aa). Residues 153 to 161 form a flexible linker region; that stretch reads GYLGVFYKR. A KaiA C-terminal domain is found at 162–270; the sequence is DPSRFLGSLP…CEMYRRSIPP (109 aa).

Homodimer. The KaiABC complex composition changes during the circadian cycle to control KaiC phosphorylation. Complexes KaiC(6), KaiA(2-4):KaiC(6), KaiB(6):KaiC(6) and KaiC(6):KaiB(6):KaiA(12) are among the most important forms, many form cooperatively. KaiA and CikA bind to the same region of the KaiB(fs) form and therefore compete.

Functionally, key component of the KaiABC oscillator complex, which constitutes the main circadian regulator in cyanobacteria. Complex composition changes during the circadian cycle to control KaiC phosphorylation. KaiA stimulates KaiC autophosphorylation, while KaiB sequesters KaiA, leading to KaiC autodephosphorylation. KaiA binding to the KaiC CII domain during the subjective day yields KaiA(2-4):KaiC(6) complexes which stimulate KaiC autophosphorylation. Phospho-Ser-431 KaiC accumulation triggers binding of KaiB during the subjective night to form the KaiB(6):KaiC(6) complex, leading to changes in the output regulators CikA and SasA. KaiB(6):KaiC(6) formation exposes a site for KaiA binding on KaiB that sequesters KaiA from KaiC's CII domain, making the KaiC(6):KaiB(6):KaiA(12) complex resulting in KaiC autodephosphorylation. Complete dephosphorylation of KaiC leads to dissociation of KaiA(2):KaiB(1), completing 1 cycle of the Kai oscillator. Binds oxidized quinones via the N-terminal PsR domain, allowing it to sense redox changes and possibly mediate clock input. The polypeptide is Circadian clock oscillator protein KaiA (Parasynechococcus marenigrum (strain WH8102)).